A 100-amino-acid polypeptide reads, in one-letter code: Urease subunit gamma (100 aa).

The protein belongs to the urease gamma subunit family. In terms of assembly, heterotrimer of UreA (gamma), UreB (beta) and UreC (alpha) subunits. Three heterotrimers associate to form the active enzyme.

Its subcellular location is the cytoplasm. The enzyme catalyses urea + 2 H2O + H(+) = hydrogencarbonate + 2 NH4(+). It participates in nitrogen metabolism; urea degradation; CO(2) and NH(3) from urea (urease route): step 1/1. This Lachnoclostridium phytofermentans (strain ATCC 700394 / DSM 18823 / ISDg) (Clostridium phytofermentans) protein is Urease subunit gamma.